Consider the following 66-residue polypeptide: COP-associated protein (66 aa).

An HMA domain is found at 1–66; it reads MKATFQVPSI…ALLDAGQEVV (66 aa). Cu cation is bound by residues cysteine 12 and cysteine 15. A disulfide bridge links cysteine 12 with cysteine 15.

Its function is as follows. Part of a cation-transporting system which is associated with copper export out of the H.pylori cells. The protein is COP-associated protein (copP) of Helicobacter pylori (strain ATCC 700392 / 26695) (Campylobacter pylori).